The following is a 383-amino-acid chain: Succinyl-diaminopimelate desuccinylase (383 aa).

A Zn(2+)-binding site is contributed by histidine 69. The active site involves aspartate 71. A Zn(2+)-binding site is contributed by aspartate 103. The active-site Proton acceptor is the glutamate 137. Residues glutamate 138, glutamate 166, and histidine 357 each contribute to the Zn(2+) site.

It belongs to the peptidase M20A family. DapE subfamily. As to quaternary structure, homodimer. It depends on Zn(2+) as a cofactor. Requires Co(2+) as cofactor.

It catalyses the reaction N-succinyl-(2S,6S)-2,6-diaminopimelate + H2O = (2S,6S)-2,6-diaminopimelate + succinate. It functions in the pathway amino-acid biosynthesis; L-lysine biosynthesis via DAP pathway; LL-2,6-diaminopimelate from (S)-tetrahydrodipicolinate (succinylase route): step 3/3. Catalyzes the hydrolysis of N-succinyl-L,L-diaminopimelic acid (SDAP), forming succinate and LL-2,6-diaminopimelate (DAP), an intermediate involved in the bacterial biosynthesis of lysine and meso-diaminopimelic acid, an essential component of bacterial cell walls. The polypeptide is Succinyl-diaminopimelate desuccinylase (Rickettsia prowazekii (strain Madrid E)).